Consider the following 168-residue polypeptide: Photosystem I assembly protein Ycf3 (168 aa).

TPR repeat units follow at residues 35–68 (AFTY…EIDP), 72–105 (SYIL…NPFL), and 120–153 (GEQA…TPGN).

The protein belongs to the Ycf3 family.

It localises to the plastid. The protein resides in the chloroplast thylakoid membrane. Its function is as follows. Essential for the assembly of the photosystem I (PSI) complex. May act as a chaperone-like factor to guide the assembly of the PSI subunits. The protein is Photosystem I assembly protein Ycf3 of Liriodendron tulipifera (Tuliptree).